Here is a 380-residue protein sequence, read N- to C-terminus: Succinyl-diaminopimelate desuccinylase (380 aa).

H68 contacts Zn(2+). D70 is an active-site residue. Zn(2+) is bound at residue D101. The Proton acceptor role is filled by E135. Zn(2+) is bound by residues E136, E164, and H350.

This sequence belongs to the peptidase M20A family. DapE subfamily. As to quaternary structure, homodimer. Zn(2+) is required as a cofactor. It depends on Co(2+) as a cofactor.

It carries out the reaction N-succinyl-(2S,6S)-2,6-diaminopimelate + H2O = (2S,6S)-2,6-diaminopimelate + succinate. It participates in amino-acid biosynthesis; L-lysine biosynthesis via DAP pathway; LL-2,6-diaminopimelate from (S)-tetrahydrodipicolinate (succinylase route): step 3/3. Functionally, catalyzes the hydrolysis of N-succinyl-L,L-diaminopimelic acid (SDAP), forming succinate and LL-2,6-diaminopimelate (DAP), an intermediate involved in the bacterial biosynthesis of lysine and meso-diaminopimelic acid, an essential component of bacterial cell walls. The sequence is that of Succinyl-diaminopimelate desuccinylase from Tolumonas auensis (strain DSM 9187 / NBRC 110442 / TA 4).